The chain runs to 472 residues: Na(+)/H(+) antiporter NhaA 1 (472 aa).

The next 11 membrane-spanning stretches (helical) occupy residues 34-54 (TASITLLLAAIAAMVIANSQW), 86-106 (GLMVLFFFLLGLEIKYECLVG), 116-136 (LVIAMAIGGMLLPAGIYAGVA), 146-166 (GWGIPMATDTAFALGILALLG), 175-195 (VTLSALAIVDDMGAVAVIGLF), 203-223 (TSLMYAGLTLGGLFALNVLGF), 227-247 (IFYLVGGILLWWFVLQSGVHA), 324-344 (PVSLIILPIFAFINAGVALPD), 353-373 (VVFIGVASAMVLGKVIGISVF), 394-414 (VFALACLAGVGFTMSLFIASL), and 428-448 (LGILAGSVIAAIIGTTLFLMI).

Belongs to the NhaA Na(+)/H(+) (TC 2.A.33) antiporter family.

It localises to the cell inner membrane. The catalysed reaction is Na(+)(in) + 2 H(+)(out) = Na(+)(out) + 2 H(+)(in). Functionally, na(+)/H(+) antiporter that extrudes sodium in exchange for external protons. This Pseudoalteromonas atlantica (strain T6c / ATCC BAA-1087) protein is Na(+)/H(+) antiporter NhaA 1.